Here is a 511-residue protein sequence, read N- to C-terminus: Cytochrome P450 monooxygenase esdpI (511 aa).

Residues 14 to 34 traverse the membrane as a helical segment; it reads VRAGLAIGVAILAIIVLFPGI. Position 453 (cysteine 453) interacts with heme.

It belongs to the cytochrome P450 family. Heme is required as a cofactor.

It is found in the membrane. It participates in secondary metabolite biosynthesis; terpenoid biosynthesis. In terms of biological role, cytochrome P450 monooxygenase; part of the cluster that mediates the biosynthesis of shearones, diterpenoid pyrones (DPs) which are structurally diverse meroterpenoids consisting of a diterpene linked by a pyrone, and which may exhibit a range of bioactivities. Whitin the pathway, esdpI takes part in the molecular scaffold modification via the hydroxylation at C-20 and can transform shearone C into shearone G. The molecular scaffold is commonly biosynthesized by a series of enzymes including the non-reducing polyketide synthase (NR-PKS) esdpA that generates an alpha-pyrone; the prenyltransferase esdpC that attaches a geranylgeranyl pyrophosphate (GGPP) produced by the GGPP synthase (GGPPS) esdpD onto the pyrone unit; the FAD-dependent monooxygenase esdpE that converts an olefin on the diterpene unit into an epoxide; and the terpene cyclase esdpB that catalyzes the cyclization reactions to give the molecular backbone shearone A. In the modification steps, esdpF oxidizes the hydroxy group to a ketone at C-3 and esdpG then attaches hydroxy groups at both C-11 and C-12. After that, esdpI hydroxylates at C-20 and esdpH hydroxylates at C-6'. The ether bridge is generated by nucleophilic attack of the hydroxy group at C-20 to the carbonyl carbon at C-3. EsdpH can also functions prior to esdpI. The different combinations of these modification enzymes lead to the production of diverse shearone derivatives, shearone I being the end product of the pathway. The alpha-ketoglutarate-dependent dioxygenase esdpJ seems not to be involved in this pathway. The sequence is that of Cytochrome P450 monooxygenase esdpI from Penicillium shearii (Eupenicillium shearii).